Reading from the N-terminus, the 391-residue chain is UDP-N-acetylglucosamine--N-acetylmuramyl-(pentapeptide) pyrophosphoryl-undecaprenol N-acetylglucosamine transferase (391 aa).

Residues 11–13 (TGG), Arg176, Ser206, and Gln312 contribute to the UDP-N-acetyl-alpha-D-glucosamine site.

It belongs to the glycosyltransferase 28 family. MurG subfamily.

It is found in the cell inner membrane. It carries out the reaction di-trans,octa-cis-undecaprenyl diphospho-N-acetyl-alpha-D-muramoyl-L-alanyl-D-glutamyl-meso-2,6-diaminopimeloyl-D-alanyl-D-alanine + UDP-N-acetyl-alpha-D-glucosamine = di-trans,octa-cis-undecaprenyl diphospho-[N-acetyl-alpha-D-glucosaminyl-(1-&gt;4)]-N-acetyl-alpha-D-muramoyl-L-alanyl-D-glutamyl-meso-2,6-diaminopimeloyl-D-alanyl-D-alanine + UDP + H(+). Its pathway is cell wall biogenesis; peptidoglycan biosynthesis. In terms of biological role, cell wall formation. Catalyzes the transfer of a GlcNAc subunit on undecaprenyl-pyrophosphoryl-MurNAc-pentapeptide (lipid intermediate I) to form undecaprenyl-pyrophosphoryl-MurNAc-(pentapeptide)GlcNAc (lipid intermediate II). The protein is UDP-N-acetylglucosamine--N-acetylmuramyl-(pentapeptide) pyrophosphoryl-undecaprenol N-acetylglucosamine transferase of Treponema denticola (strain ATCC 35405 / DSM 14222 / CIP 103919 / JCM 8153 / KCTC 15104).